A 445-amino-acid chain; its full sequence is Aminopeptidase S (445 aa).

An N-terminal signal peptide occupies residues 1-45 (MRPNRFSLRRSPTAVAAVALAAVLAAGAPAAQAAGAAAPTAAAAA). Ca(2+) contacts are provided by Asp-48 and Ile-49. Residues His-130 and Asp-142 each contribute to the Zn(2+) site. The active-site Proton acceptor is the Glu-176. The Zn(2+) site is built by Glu-177, Asp-205, and His-292. An intrachain disulfide couples Cys-290 to Cys-295. Asp-307 and Asp-311 together coordinate Ca(2+). Residues 325 to 445 (GEPPTGEGVF…GYIDSWKLTF (121 aa)) enclose the P/Homo B domain. A propeptide spans 330–445 (GEGVFSNTTD…GYIDSWKLTF (116 aa)) (removed in mature form).

Belongs to the peptidase M28 family. M28A subfamily. Monomer. Ca(2+) is required as a cofactor. The cofactor is Zn(2+). It depends on Mn(2+) as a cofactor. Requires Co(2+) as cofactor.

The protein resides in the secreted. It catalyses the reaction Release of an N-terminal amino acid with a preference for large hydrophobic amino-terminus residues.. Calcium activates the enzyme, inhibited by 1,10-phenanthroline, EDTA and EGTA. End-product inhibited by L-amino acids. Non-competitively inhibited by NaF and NaH(2)PO(4). In terms of biological role, an exopeptidase specific for larger hydrophobic amino acids (especially leucine), no cleavage occurs if the next residue is proline. The protein is Aminopeptidase S of Streptomyces griseus subsp. griseus (strain JCM 4626 / CBS 651.72 / NBRC 13350 / KCC S-0626 / ISP 5235).